The sequence spans 150 residues: Protein SprT-like (150 aa).

Positions 6–147 constitute a SprT-like domain; it reads LQKLTEDISE…CGKCRGKIKR (142 aa). Histidine 67 serves as a coordination point for Zn(2+). Glutamate 68 is a catalytic residue. Histidine 71 contributes to the Zn(2+) binding site.

The protein belongs to the SprT family. Zn(2+) serves as cofactor.

The protein localises to the cytoplasm. In Bacillus subtilis (strain 168), this protein is Protein SprT-like (ydcK).